The chain runs to 130 residues: Holo-[acyl-carrier-protein] synthase (130 aa).

2 residues coordinate Mg(2+): Asp8 and Glu62.

This sequence belongs to the P-Pant transferase superfamily. AcpS family. Mg(2+) serves as cofactor.

It localises to the cytoplasm. It catalyses the reaction apo-[ACP] + CoA = holo-[ACP] + adenosine 3',5'-bisphosphate + H(+). Functionally, transfers the 4'-phosphopantetheine moiety from coenzyme A to a Ser of acyl-carrier-protein. In Variovorax paradoxus (strain S110), this protein is Holo-[acyl-carrier-protein] synthase.